Reading from the N-terminus, the 492-residue chain is Malonyl-CoA decarboxylase, mitochondrial (492 aa).

The tract at residues 1–28 (MRGLGPGLRARRLLPLRSPPRPPGPRGR) is disordered. A mitochondrion-targeting transit peptide spans 1 to 38 (MRGLGPGLRARRLLPLRSPPRPPGPRGRRLCGGLAASA). The segment at 39–189 (MDELLRRAVP…VLKSMLSEWF (151 aa)) is alpha-helical domain. Lysine 58 carries the post-translational modification N6-acetyllysine. Lysine 167 is subject to N6-acetyllysine; alternate. N6-succinyllysine; alternate is present on lysine 167. Residues 190 to 492 (SSGFLNLERV…VAQFQNNSKL (303 aa)) are catalytic domain. At lysine 210 the chain carries N6-acetyllysine. An N6-succinyllysine modification is found at lysine 221. 298–304 (QGVELGT) lines the malonyl-CoA pocket. Lysine 316 is subject to N6-acetyllysine. Residue serine 328 coordinates malonyl-CoA. The active-site Proton acceptor is serine 328. Lysine 385 bears the N6-acetyllysine; alternate mark. N6-succinyllysine; alternate is present on lysine 385. At lysine 388 the chain carries N6-acetyllysine. Malonyl-CoA is bound at residue histidine 422. The Proton donor role is filled by histidine 422. N6-acetyllysine is present on residues lysine 441 and lysine 471. The Microbody targeting signal motif lies at 490 to 492 (SKL).

In terms of assembly, homotetramer. Dimer of dimers. The two subunits within a dimer display conformational differences suggesting that at any given moment, only one of the two subunits is competent for malonyl-CoA binding and catalytic activity. Under oxidizing conditions, can form disulfide-linked homotetramers (in vitro). Associates with the peroxisomal targeting signal receptor PEX5. Interchain disulfide bonds may form in peroxisomes (Potential). Interchain disulfide bonds are not expected to form in the reducing environment of the cytoplasm and mitochondria. Post-translationally, acetylation at Lys-471 activates malonyl-CoA decarboxylase activity. Deacetylation at Lys-471 by SIRT4 represses activity, leading to promote lipogenesis.

It localises to the cytoplasm. It is found in the mitochondrion matrix. The protein resides in the peroxisome. Its subcellular location is the peroxisome matrix. It carries out the reaction malonyl-CoA + H(+) = acetyl-CoA + CO2. It participates in metabolic intermediate biosynthesis; acetyl-CoA biosynthesis; acetyl-CoA from malonyl-CoA: step 1/1. With respect to regulation, malonyl-CoA decarboxylase activity does not require any cofactors or divalent metal ions. In terms of biological role, catalyzes the conversion of malonyl-CoA to acetyl-CoA. In the fatty acid biosynthesis MCD selectively removes malonyl-CoA and thus assures that methyl-malonyl-CoA is the only chain elongating substrate for fatty acid synthase and that fatty acids with multiple methyl side chains are produced. In peroxisomes it may be involved in degrading intraperoxisomal malonyl-CoA, which is generated by the peroxisomal beta-oxidation of odd chain-length dicarboxylic fatty acids. Plays a role in the metabolic balance between glucose and lipid oxidation in muscle independent of alterations in insulin signaling. Plays a role in controlling the extent of ischemic injury by promoting glucose oxidation. In Mus musculus (Mouse), this protein is Malonyl-CoA decarboxylase, mitochondrial.